A 377-amino-acid chain; its full sequence is DNA replication and repair protein RecF (377 aa).

Residue Gly-30–Ser-37 participates in ATP binding.

This sequence belongs to the RecF family.

It localises to the cytoplasm. Functionally, the RecF protein is involved in DNA metabolism; it is required for DNA replication and normal SOS inducibility. RecF binds preferentially to single-stranded, linear DNA. It also seems to bind ATP. This chain is DNA replication and repair protein RecF, found in Colwellia psychrerythraea (strain 34H / ATCC BAA-681) (Vibrio psychroerythus).